A 96-amino-acid chain; its full sequence is Protein RnfH (96 aa).

This sequence belongs to the UPF0125 (RnfH) family.

The protein is Protein RnfH of Escherichia coli O127:H6 (strain E2348/69 / EPEC).